Consider the following 91-residue polypeptide: Acylphosphatase (91 aa).

One can recognise an Acylphosphatase-like domain in the interval 5-91; sequence RAHVFVSGRV…EGVDGFEVRW (87 aa). Active-site residues include Arg-20 and Asn-38.

This sequence belongs to the acylphosphatase family.

The catalysed reaction is an acyl phosphate + H2O = a carboxylate + phosphate + H(+). This Haloarcula marismortui (strain ATCC 43049 / DSM 3752 / JCM 8966 / VKM B-1809) (Halobacterium marismortui) protein is Acylphosphatase (acyP).